The following is a 412-amino-acid chain: Zinc finger protein 821 (412 aa).

The tract at residues 26–83 is disordered; it reads RQAMMKTDFPGDLGSQRQAIQQLRDQDSSSSDSEGDEEETTQDEVSSHTSEEDGGVVK. Residues 58–67 are compositionally biased toward acidic residues; sequence SEGDEEETTQ. C2H2-type zinc fingers lie at residues 116-140 and 150-172; these read GLCQCPLCQLDCGSREQLIAHVYQH and YMCPVCGRALSSPGSLGRHLLIH. A coiled-coil region spans residues 257-366; sequence KWALRRQNEP…EKMDMMLRAQ (110 aa). The tract at residues 278–319 is disordered; the sequence is RTAKKSRRDNETPEEREVRRMRDREAKRLQRMQETDEQRARR.

This sequence belongs to the krueppel C2H2-type zinc-finger protein family.

The protein localises to the nucleus. Its function is as follows. May be involved in transcriptional regulation. The protein is Zinc finger protein 821 (ZNF821) of Bos taurus (Bovine).